Consider the following 253-residue polypeptide: 5-oxoprolinase subunit A (253 aa).

Belongs to the LamB/PxpA family. In terms of assembly, forms a complex composed of PxpA, PxpB and PxpC.

It catalyses the reaction 5-oxo-L-proline + ATP + 2 H2O = L-glutamate + ADP + phosphate + H(+). In terms of biological role, catalyzes the cleavage of 5-oxoproline to form L-glutamate coupled to the hydrolysis of ATP to ADP and inorganic phosphate. This chain is 5-oxoprolinase subunit A, found in Chloroflexus aurantiacus (strain ATCC 29364 / DSM 637 / Y-400-fl).